Reading from the N-terminus, the 702-residue chain is Polyribonucleotide nucleotidyltransferase (702 aa).

Positions 493 and 499 each coordinate Mg(2+). In terms of domain architecture, KH spans 560 to 619 (PRLLTMRIDPERIRDVIGKGGATIRGLTEETGTNIDISDEGVVTIASADKAAAEEAKKRI). One can recognise an S1 motif domain in the interval 629-697 (GKVYDGKVAK…RQGRIRLSMK (69 aa)).

This sequence belongs to the polyribonucleotide nucleotidyltransferase family. In terms of assembly, component of the RNA degradosome, which is a multiprotein complex involved in RNA processing and mRNA degradation. Requires Mg(2+) as cofactor.

The protein resides in the cytoplasm. The enzyme catalyses RNA(n+1) + phosphate = RNA(n) + a ribonucleoside 5'-diphosphate. Its function is as follows. Involved in mRNA degradation. Catalyzes the phosphorolysis of single-stranded polyribonucleotides processively in the 3'- to 5'-direction. The sequence is that of Polyribonucleotide nucleotidyltransferase from Halorhodospira halophila (strain DSM 244 / SL1) (Ectothiorhodospira halophila (strain DSM 244 / SL1)).